A 335-amino-acid polypeptide reads, in one-letter code: Trans-3-hydroxy-L-proline dehydratase (335 aa).

Catalysis depends on Cys91, which acts as the Proton acceptor. Residues 92-93 (GH), His222, and 256-257 (GS) each bind substrate.

The protein belongs to the proline racemase family. Homodimer.

It catalyses the reaction trans-3-hydroxy-L-proline = 1-pyrroline-2-carboxylate + H2O. Its function is as follows. Catalyzes the dehydration of trans-3-hydroxy-L-proline (t3LHyp) to Delta(1)-pyrroline-2-carboxylate (Pyr2C). Does not possess neither proline racemase nor 4-hydroxyproline 2-epimerase activities. The sequence is that of Trans-3-hydroxy-L-proline dehydratase from Burkholderia cenocepacia (strain HI2424).